The chain runs to 222 residues: GTP cyclohydrolase 1 (222 aa).

Cys-111, His-114, and Cys-182 together coordinate Zn(2+).

It belongs to the GTP cyclohydrolase I family. As to quaternary structure, toroid-shaped homodecamer, composed of two pentamers of five dimers.

The enzyme catalyses GTP + H2O = 7,8-dihydroneopterin 3'-triphosphate + formate + H(+). The protein operates within cofactor biosynthesis; 7,8-dihydroneopterin triphosphate biosynthesis; 7,8-dihydroneopterin triphosphate from GTP: step 1/1. The polypeptide is GTP cyclohydrolase 1 (Enterobacter sp. (strain 638)).